The sequence spans 535 residues: MKTKFIFITGGVVSSIGKGLAAASLGALLEARGLRVTLQKLDPYINVDPGTMSPFQHGEVFVTDDGAETDLDLGHYERFTNARLSKKSNFTTGQVYFSVIDKERRGDYLGGTVQVIPHITDEMKCKIIENAKGADVAIVEVGGTVGDIESLPFLEAIRQFRFDRGAGNTLYVHVTLVPYIRTAGELKTKPTQHSVMELRKIGIQPDILLCRSEREIPQEMKNKIALFCNVDVKDVIPVVDSEHIYYVPLALSKERLDERVVEKLNIWTKAPDLTPWQDVVETVCHPGHGEVRIAIVGKYVNLTESYKSLSEALTHGGIANDCRVSLKYIDSEKIERDGIDGHLVDMDAVLVPGGFGERGTEGKVMAIEYARLHKIPFFGICLGMQMAVVEYARNVCHIDDACSSEFKKGCGNPVIHLMEEQKSVSKKGGTMRLGGYPCSLEKGTLAHVAYNAQEISERHRHRYEFNNAYREVLTKNGLILSGIYRDKDLVEVVEIADHPWFLGCQFHPEFKSKPLAPHPLFKSFVRAALIQRDAR.

The segment at 1–266 is amidoligase domain; it reads MKTKFIFITG…DERVVEKLNI (266 aa). S14 lines the CTP pocket. S14 contributes to the UTP binding site. ATP-binding positions include 15-20 and D72; that span reads SIGKGL. Residues D72 and E140 each coordinate Mg(2+). Residues 147–149, 187–192, and K223 each bind CTP; these read DIE and KTKPTQ. UTP is bound by residues 187–192 and K223; that span reads KTKPTQ. Positions 292-534 constitute a Glutamine amidotransferase type-1 domain; that stretch reads RIAIVGKYVN…VRAALIQRDA (243 aa). G354 is a binding site for L-glutamine. The active-site Nucleophile; for glutamine hydrolysis is C381. Residues 382–385, E405, and R462 contribute to the L-glutamine site; that span reads LGMQ. Catalysis depends on residues H507 and E509.

It belongs to the CTP synthase family. As to quaternary structure, homotetramer.

The catalysed reaction is UTP + L-glutamine + ATP + H2O = CTP + L-glutamate + ADP + phosphate + 2 H(+). It carries out the reaction L-glutamine + H2O = L-glutamate + NH4(+). It catalyses the reaction UTP + NH4(+) + ATP = CTP + ADP + phosphate + 2 H(+). It functions in the pathway pyrimidine metabolism; CTP biosynthesis via de novo pathway; CTP from UDP: step 2/2. Allosterically activated by GTP, when glutamine is the substrate; GTP has no effect on the reaction when ammonia is the substrate. The allosteric effector GTP functions by stabilizing the protein conformation that binds the tetrahedral intermediate(s) formed during glutamine hydrolysis. Inhibited by the product CTP, via allosteric rather than competitive inhibition. In terms of biological role, catalyzes the ATP-dependent amination of UTP to CTP with either L-glutamine or ammonia as the source of nitrogen. Regulates intracellular CTP levels through interactions with the four ribonucleotide triphosphates. The protein is CTP synthase of Pelobacter propionicus (strain DSM 2379 / NBRC 103807 / OttBd1).